Reading from the N-terminus, the 193-residue chain is Nucleoside triphosphate pyrophosphatase (193 aa).

Asp70 functions as the Proton acceptor in the catalytic mechanism.

It belongs to the Maf family. It depends on a divalent metal cation as a cofactor.

It localises to the cytoplasm. The enzyme catalyses a ribonucleoside 5'-triphosphate + H2O = a ribonucleoside 5'-phosphate + diphosphate + H(+). It catalyses the reaction a 2'-deoxyribonucleoside 5'-triphosphate + H2O = a 2'-deoxyribonucleoside 5'-phosphate + diphosphate + H(+). In terms of biological role, nucleoside triphosphate pyrophosphatase. May have a dual role in cell division arrest and in preventing the incorporation of modified nucleotides into cellular nucleic acids. This chain is Nucleoside triphosphate pyrophosphatase, found in Anaplasma phagocytophilum (strain HZ).